A 147-amino-acid polypeptide reads, in one-letter code: Small ribosomal subunit protein uS13 (147 aa).

The tract at residues 115 to 147 (SYKGRRHEAGLPVRGQRTKSTFRNSSSVGVKRS) is disordered. The span at 132 to 147 (TKSTFRNSSSVGVKRS) shows a compositional bias: polar residues.

This sequence belongs to the universal ribosomal protein uS13 family. In terms of assembly, part of the 30S ribosomal subunit. Forms a loose heterodimer with protein S19. Forms two bridges to the 50S subunit in the 70S ribosome.

Located at the top of the head of the 30S subunit, it contacts several helices of the 16S rRNA. In the 70S ribosome it contacts the 23S rRNA (bridge B1a) and protein L5 of the 50S subunit (bridge B1b), connecting the 2 subunits; these bridges are implicated in subunit movement. The sequence is that of Small ribosomal subunit protein uS13 from Methanobrevibacter smithii (strain ATCC 35061 / DSM 861 / OCM 144 / PS).